A 467-amino-acid chain; its full sequence is Probable receptor-like protein kinase At3g17420 (467 aa).

The first 35 residues, 1-35 (MTSQLKRTLTKRYGVLELWEIIVIALFAAFIVILV), serve as a signal peptide directing secretion. The Extracellular portion of the chain corresponds to 36 to 123 (LSVWLSFRKK…LPPSTPSTTA (88 aa)). N50 carries an N-linked (GlcNAc...) asparagine glycan. Position 70 is a phosphoserine (S70). A glycan (N-linked (GlcNAc...) asparagine) is linked at N79. Residues 102-126 (GSLEKKPLVGSHLPPSTPSTTAPSP) are disordered. Residues 124–144 (PSPLLGLPEVSHIGWGHWFTL) form a helical membrane-spanning segment. Residues 145-467 (RDLQLATNHF…DNDITTDAKI (323 aa)) lie on the Cytoplasmic side of the membrane. The region spanning 154-433 (FSKESIIGDG…MLESDEYPVM (280 aa)) is the Protein kinase domain. Residues 160-168 (IGDGGYGVV) and K182 contribute to the ATP site. Y227 carries the post-translational modification Phosphotyrosine. The active-site Proton acceptor is D280. 2 positions are modified to phosphoserine: S284 and S313. Residues T314 and T319 each carry the phosphothreonine modification. At Y327 the chain carries Phosphotyrosine. Residues 413–467 (DKRPKMSQVARMLESDEYPVMPREERRRRRNQNAETHRESTDTNKDNDITTDAKI) are disordered. A compositionally biased stretch (basic and acidic residues) spans 447 to 467 (ETHRESTDTNKDNDITTDAKI).

It belongs to the protein kinase superfamily. Ser/Thr protein kinase family.

It is found in the cell membrane. The catalysed reaction is L-seryl-[protein] + ATP = O-phospho-L-seryl-[protein] + ADP + H(+). It carries out the reaction L-threonyl-[protein] + ATP = O-phospho-L-threonyl-[protein] + ADP + H(+). The chain is Probable receptor-like protein kinase At3g17420 from Arabidopsis thaliana (Mouse-ear cress).